Consider the following 254-residue polypeptide: Thiazole synthase (254 aa).

Lys-93 serves as the catalytic Schiff-base intermediate with DXP. Residues Gly-154, 181 to 182 (AG), and 203 to 204 (NT) each bind 1-deoxy-D-xylulose 5-phosphate.

It belongs to the ThiG family. As to quaternary structure, homotetramer. Forms heterodimers with either ThiH or ThiS.

Its subcellular location is the cytoplasm. It carries out the reaction [ThiS sulfur-carrier protein]-C-terminal-Gly-aminoethanethioate + 2-iminoacetate + 1-deoxy-D-xylulose 5-phosphate = [ThiS sulfur-carrier protein]-C-terminal Gly-Gly + 2-[(2R,5Z)-2-carboxy-4-methylthiazol-5(2H)-ylidene]ethyl phosphate + 2 H2O + H(+). Its pathway is cofactor biosynthesis; thiamine diphosphate biosynthesis. In terms of biological role, catalyzes the rearrangement of 1-deoxy-D-xylulose 5-phosphate (DXP) to produce the thiazole phosphate moiety of thiamine. Sulfur is provided by the thiocarboxylate moiety of the carrier protein ThiS. In vitro, sulfur can be provided by H(2)S. The chain is Thiazole synthase from Ruegeria pomeroyi (strain ATCC 700808 / DSM 15171 / DSS-3) (Silicibacter pomeroyi).